A 776-amino-acid chain; its full sequence is Kinesin-like protein KLP1 (776 aa).

Residues 5-335 (AVKVFVRTRP…LRFASRVRTL (331 aa)) form the Kinesin motor domain. Position 91–98 (91–98 (GQTGAGKT)) interacts with ATP. Positions 348–371 (ALLLRRYERQIKELKAELAMRDTL) form a coiled coil. The tract at residues 441 to 535 (RRATEEGSGA…SNWGDAGPLS (95 aa)) is disordered. Residues 447–460 (GSGAAARGGDSAGP) show a composition bias toward low complexity. A coiled-coil region spans residues 579-657 (ALADTKASIR…SLKSAREELE (79 aa)). The globular stretch occupies residues 658–776 (PQIQAVAVAR…TQAVNRGLAR (119 aa)).

It belongs to the TRAFAC class myosin-kinesin ATPase superfamily. Kinesin family.

The protein resides in the cytoplasm. Its subcellular location is the cytoskeleton. It is found in the flagellum axoneme. May play a role in rotation or twisting of the central pair microtubules of the flagella axoneme. The polypeptide is Kinesin-like protein KLP1 (KLP1) (Chlamydomonas reinhardtii (Chlamydomonas smithii)).